A 2325-amino-acid polypeptide reads, in one-letter code: Protein sidekick homolog (2325 aa).

The N-terminal stretch at 1–26 is a signal peptide; sequence MRNRLLLIFYTTTVLWTIGYTQLVLG. The Extracellular portion of the chain corresponds to 27–2019; that stretch reads KPPIFQDGGS…IPDDPFYTTW (1993 aa). Ig-like C2-type domains follow at residues 28 to 105, 217 to 319, and 324 to 397; these read PPIF…AAIS, PSLQ…AYMT, and PILK…ADLA. 3 disulfides stabilise this stretch: C52–C94, C247–C301, and C345–C386. N-linked (GlcNAc...) asparagine glycosylation is present at N407. Ig-like C2-type domains follow at residues 456–544 and 547–638; these read PSQK…VQVN and SLIE…AMLQ. Cystine bridges form between C480–C528 and C568–C622. 6 N-linked (GlcNAc...) asparagine glycosylation sites follow: N632, N655, N807, N868, N932, and N1016. 13 consecutive Fibronectin type-III domains span residues 645-751, 756-853, 858-957, 961-1055, 1059-1154, 1159-1254, 1259-1359, 1363-1457, 1463-1566, 1571-1671, 1673-1775, 1776-1872, and 1873-2004; these read MPER…MPQQ, APRN…TSEG, APKN…TEED, SVDE…VPPE, RPSM…TLQT, PSQR…TYES, SPRN…TMED, PPES…SSVR, APAP…TLPS, QPIS…VGYS, PKRN…DKPG, PVGI…SKDG, and PPPP…TEQL. The segment at 1036–1059 is disordered; it reads TRKGDGPVEETKFESGVPPELPGR. Basic and acidic residues predominate over residues 1037–1048; the sequence is RKGDGPVEETKF. The N-linked (GlcNAc...) asparagine glycan is linked to N1107. Positions 1137 to 1161 are disordered; it reads KGRGAPSEPSRSFETLQTNPDTPSQ. Polar residues predominate over residues 1145–1161; that stretch reads PSRSFETLQTNPDTPSQ. A glycan (N-linked (GlcNAc...) asparagine) is linked at N1614. 2 disordered regions span residues 1857 to 1884 and 1918 to 1947; these read GEQRSANVTIGPSKDGPPPPSKPQITSG and PANGYVSQRPRRNEIKGAKSAAQTAAATST. N1863 carries an N-linked (GlcNAc...) asparagine glycan. The segment covering 1935–1947 has biased composition (low complexity); it reads AKSAAQTAAATST. A helical transmembrane segment spans residues 2020–2040; sequence WFMALVAMGAFVLIVIIIAIL. Over 2041–2325 the chain is Cytoplasmic; sequence CVTGSSAKYR…NLTTGFSSFV (285 aa). Disordered regions lie at residues 2080–2113, 2164–2187, 2202–2226, and 2285–2325; these read NMTRSRELPTRPGTTQSWVSDQSREPPAYGSVLG, TAYVTPSARGGSDNGRNEYMPTRS, RGHIPSSSGGSGAGSQPQGSPLQQP, and ILTG…SSFV. Positions 2091-2100 are enriched in polar residues; sequence PGTTQSWVSD. The span at 2215–2226 shows a compositional bias: low complexity; sequence GSQPQGSPLQQP. Polar residues-rich tracts occupy residues 2294-2305 and 2313-2325; these read AGRSSTTDSTSE and ATPNLTTGFSSFV.

It belongs to the sidekick family.

It is found in the membrane. In terms of biological role, cell adhesion protein. This is Protein sidekick homolog (rig-4) from Caenorhabditis elegans.